The chain runs to 338 residues: Lipoate-protein ligase A (338 aa).

A BPL/LPL catalytic domain is found at 29-216; that stretch reads PADQRVLFLW…AYCEHYQQQV (188 aa). ATP contacts are provided by residues Arg71, 76–79, and Lys134; that span reads GAVF. A (R)-lipoate-binding site is contributed by Lys134.

This sequence belongs to the LplA family. As to quaternary structure, monomer.

The protein localises to the cytoplasm. The catalysed reaction is L-lysyl-[lipoyl-carrier protein] + (R)-lipoate + ATP = N(6)-[(R)-lipoyl]-L-lysyl-[lipoyl-carrier protein] + AMP + diphosphate + H(+). It functions in the pathway protein modification; protein lipoylation via exogenous pathway; protein N(6)-(lipoyl)lysine from lipoate: step 1/2. Its pathway is protein modification; protein lipoylation via exogenous pathway; protein N(6)-(lipoyl)lysine from lipoate: step 2/2. In terms of biological role, catalyzes both the ATP-dependent activation of exogenously supplied lipoate to lipoyl-AMP and the transfer of the activated lipoyl onto the lipoyl domains of lipoate-dependent enzymes. The chain is Lipoate-protein ligase A from Vibrio cholerae serotype O1 (strain ATCC 39541 / Classical Ogawa 395 / O395).